Reading from the N-terminus, the 409-residue chain is Bone morphogenetic protein 4 (409 aa).

The signal sequence occupies residues 1–19 (MIPGNRMLMVVLLCQVLLG). A propeptide spanning residues 20-293 (GASHASLIPE…ALTRRRRAKR (274 aa)) is cleaved from the precursor. A Phosphoserine modification is found at serine 91. The segment at 91–110 (SGEEEEEEQMPSGGLEYPER) is disordered. 4 N-linked (GlcNAc...) asparagine glycosylation sites follow: asparagine 144, asparagine 209, asparagine 351, and asparagine 366. 3 disulfides stabilise this stretch: cysteine 309/cysteine 374, cysteine 338/cysteine 406, and cysteine 342/cysteine 408.

It belongs to the TGF-beta family. In terms of assembly, homodimer; disulfide-linked. Interacts with GREM2. Part of a complex consisting of TWSG1 and CHRD. Interacts with the serine proteases, HTRA1 and HTRA3; the interaction with either inhibits BMP4-mediated signaling. The HTRA protease activity is required for this inhibition. Interacts with SOSTDC1. Interacts with FBN1 (via N-terminal domain) and FBN2. Interacts with type I receptor BMPR1A. Interacts with type II receptor BMPR2. Interacts with FSTL1; this interaction inhibits the activation of the BMP4/Smad1/5/8 signaling pathway. Interacts with SCUBE3. Interacts with TGFBR3.

The protein resides in the secreted. The protein localises to the extracellular space. It is found in the extracellular matrix. Functionally, growth factor of the TGF-beta superfamily that plays essential roles in many developmental processes, including neurogenesis, vascular development, angiogenesis and osteogenesis. Acts in concert with PTHLH/PTHRP to stimulate ductal outgrowth during embryonic mammary development and to inhibit hair follicle induction. Initiates the canonical BMP signaling cascade by associating with type I receptor BMPR1A and type II receptor BMPR2. Once all three components are bound together in a complex at the cell surface, BMPR2 phosphorylates and activates BMPR1A. In turn, BMPR1A propagates signal by phosphorylating SMAD1/5/8 that travel to the nucleus and act as activators and repressors of transcription of target genes. Positively regulates the expression of odontogenic development regulator MSX1 via inducing the IPO7-mediated import of SMAD1 to the nucleus. Required for MSX1-mediated mesenchymal molar tooth bud development beyond the bud stage, via promoting Wnt signaling. Acts as a positive regulator of odontoblast differentiation during mesenchymal tooth germ formation, expression is repressed during the bell stage by MSX1-mediated inhibition of CTNNB1 signaling. Able to induce its own expression in dental mesenchymal cells and also in the neighboring dental epithelial cells via an MSX1-mediated pathway. Can also signal through non-canonical BMP pathways such as ERK/MAP kinase, PI3K/Akt, or SRC cascades. For example, induces SRC phosphorylation which, in turn, activates VEGFR2, leading to an angiogenic response. In Oryctolagus cuniculus (Rabbit), this protein is Bone morphogenetic protein 4 (BMP4).